Here is a 424-residue protein sequence, read N- to C-terminus: Double-stranded RNA-binding protein 8 (424 aa).

Pro residues predominate over residues 1 to 10; the sequence is MDMPPTPLPP. The disordered stretch occupies residues 1-22; the sequence is MDMPPTPLPPETANTSPAPNGA. 2 consecutive DRBM domains span residues 33 to 102 and 118 to 185; these read VFKS…EIVK and LCKN…AIQG. Basic and acidic residues-rich tracts occupy residues 287–308 and 318–328; these read KRVE…ENQH and DEARVEQEPSR. The interval 287–330 is disordered; the sequence is KRVEAEPPRDIEMVQPDKENQHSDAALVQPDDEARVEQEPSRDI.

Functionally, binds double-stranded RNA. The polypeptide is Double-stranded RNA-binding protein 8 (DRB8) (Oryza sativa subsp. japonica (Rice)).